The chain runs to 542 residues: uncharacterized protein (542 aa).

5 consecutive transmembrane segments (helical) span residues 4 to 23 (FVEN…LLLG), 28 to 47 (FGFR…FSTI), 51 to 70 (ITVP…YTIG), 91 to 113 (LALG…LGLA), and 160 to 182 (YSLT…GGLF). RCK C-terminal domains follow at residues 190–272 (AKNA…LLGE) and 274–355 (VDGH…IFGD). 5 helical membrane passes run 363–385 (FNLV…EFPL), 390–412 (ALSL…MGRT), 425–447 (LALR…GAGF), 457–479 (LLII…VIGH), and 519–541 (YTSV…LFLL).

This sequence belongs to the AAE transporter (TC 2.A.81) family.

It is found in the cell membrane. This is an uncharacterized protein from Corynebacterium efficiens (strain DSM 44549 / YS-314 / AJ 12310 / JCM 11189 / NBRC 100395).